Consider the following 325-residue polypeptide: Helicase VP6-A (325 aa).

Disordered stretches follow at residues 1 to 122 and 185 to 230; these read MLLA…GATG and DLRR…EPAR. Composition is skewed to basic and acidic residues over residues 8–18, 32–54, 61–79, and 92–105; these read VIKRSSEELKQ, EGGK…KDGE, GQKE…DRRI, and LGER…RGDG. Lysine 106 is a binding site for ATP. Gly residues predominate over residues 106-122; it reads KVGGGGGDADAGVGATG. Basic and acidic residues-rich tracts occupy residues 185–203 and 211–229; these read DLRR…ERGG and HGDA…EEPA.

It belongs to the orbivirus VP6 family. As to quaternary structure, homohexamer.

The protein resides in the virion. The enzyme catalyses ATP + H2O = ADP + phosphate + H(+). In terms of biological role, ATP dependent RNA helicase essential for RNA packaging and viral transcription. Possesses ss- and dsRNA-binding capacity. This chain is Helicase VP6-A (Segment-9), found in Bluetongue virus 17 (isolate USA) (BTV 17).